We begin with the raw amino-acid sequence, 266 residues long: Undecaprenyl-diphosphatase (266 aa).

The next 8 helical transmembrane spans lie at 3–23 (MSLL…FLPV), 41–61 (GTET…VVLY), 86–106 (VLVG…AIKA), 108–128 (LNTP…ILVI), 149–171 (FGVG…ATIM), 184–204 (AEYS…LALW), 220–240 (IGFV…LGVV), and 245–265 (FAPF…WLLA).

The protein belongs to the UppP family.

The protein localises to the cell inner membrane. The enzyme catalyses di-trans,octa-cis-undecaprenyl diphosphate + H2O = di-trans,octa-cis-undecaprenyl phosphate + phosphate + H(+). In terms of biological role, catalyzes the dephosphorylation of undecaprenyl diphosphate (UPP). Confers resistance to bacitracin. The protein is Undecaprenyl-diphosphatase of Rhizorhabdus wittichii (strain DSM 6014 / CCUG 31198 / JCM 15750 / NBRC 105917 / EY 4224 / RW1) (Sphingomonas wittichii).